Consider the following 182-residue polypeptide: Rhodanese-like domain-containing protein 15, chloroplastic (182 aa).

The transit peptide at 1-65 directs the protein to the chloroplast; it reads METTAFNTTS…TTSRGNVAAE (65 aa). A Rhodanese domain is found at 82 to 182; sequence AQAGYRYLDV…WTENELPVEE (101 aa). C142 (cysteine persulfide intermediate) is an active-site residue.

Its subcellular location is the plastid. It is found in the chloroplast. The protein localises to the thylakoid. The chain is Rhodanese-like domain-containing protein 15, chloroplastic (STR15) from Arabidopsis thaliana (Mouse-ear cress).